Consider the following 388-residue polypeptide: Arginine biosynthesis bifunctional protein ArgJ (388 aa).

Positions 150, 172, 183, 263, 383, and 388 each coordinate substrate. T183 (nucleophile) is an active-site residue.

It belongs to the ArgJ family. Heterotetramer of two alpha and two beta chains.

It localises to the cytoplasm. It catalyses the reaction N(2)-acetyl-L-ornithine + L-glutamate = N-acetyl-L-glutamate + L-ornithine. It carries out the reaction L-glutamate + acetyl-CoA = N-acetyl-L-glutamate + CoA + H(+). It participates in amino-acid biosynthesis; L-arginine biosynthesis; L-ornithine and N-acetyl-L-glutamate from L-glutamate and N(2)-acetyl-L-ornithine (cyclic): step 1/1. The protein operates within amino-acid biosynthesis; L-arginine biosynthesis; N(2)-acetyl-L-ornithine from L-glutamate: step 1/4. In terms of biological role, catalyzes two activities which are involved in the cyclic version of arginine biosynthesis: the synthesis of N-acetylglutamate from glutamate and acetyl-CoA as the acetyl donor, and of ornithine by transacetylation between N(2)-acetylornithine and glutamate. The polypeptide is Arginine biosynthesis bifunctional protein ArgJ (Corynebacterium glutamicum (strain ATCC 13032 / DSM 20300 / JCM 1318 / BCRC 11384 / CCUG 27702 / LMG 3730 / NBRC 12168 / NCIMB 10025 / NRRL B-2784 / 534)).